The following is a 481-amino-acid chain: Probable cytosol aminopeptidase (481 aa).

Residues Lys247 and Asp252 each contribute to the Mn(2+) site. Residue Lys259 is part of the active site. Residues Asp270, Asp329, and Glu331 each coordinate Mn(2+). Arg333 is a catalytic residue.

Belongs to the peptidase M17 family. Mn(2+) is required as a cofactor.

It is found in the cytoplasm. The catalysed reaction is Release of an N-terminal amino acid, Xaa-|-Yaa-, in which Xaa is preferably Leu, but may be other amino acids including Pro although not Arg or Lys, and Yaa may be Pro. Amino acid amides and methyl esters are also readily hydrolyzed, but rates on arylamides are exceedingly low.. It catalyses the reaction Release of an N-terminal amino acid, preferentially leucine, but not glutamic or aspartic acids.. Its function is as follows. Presumably involved in the processing and regular turnover of intracellular proteins. Catalyzes the removal of unsubstituted N-terminal amino acids from various peptides. The protein is Probable cytosol aminopeptidase of Clostridium tetani (strain Massachusetts / E88).